Consider the following 357-residue polypeptide: tRNA N6-adenosine threonylcarbamoyltransferase (357 aa).

Residues H113 and H117 each coordinate Fe cation. Substrate-binding positions include 136-140 (LVSGG), D169, G182, and N288. A Fe cation-binding site is contributed by D316.

Belongs to the KAE1 / TsaD family. The cofactor is Fe(2+).

It is found in the cytoplasm. It catalyses the reaction L-threonylcarbamoyladenylate + adenosine(37) in tRNA = N(6)-L-threonylcarbamoyladenosine(37) in tRNA + AMP + H(+). Functionally, required for the formation of a threonylcarbamoyl group on adenosine at position 37 (t(6)A37) in tRNAs that read codons beginning with adenine. Is involved in the transfer of the threonylcarbamoyl moiety of threonylcarbamoyl-AMP (TC-AMP) to the N6 group of A37, together with TsaE and TsaB. TsaD likely plays a direct catalytic role in this reaction. This chain is tRNA N6-adenosine threonylcarbamoyltransferase, found in Gemmatimonas aurantiaca (strain DSM 14586 / JCM 11422 / NBRC 100505 / T-27).